A 540-amino-acid chain; its full sequence is Putative rhamnogalacturonase (540 aa).

The N-terminal stretch at 1 to 23 (MGFLTLFHMAFLAVSLFVSGALA) is a signal peptide. Cystine bridges form between cysteine 53–cysteine 100 and cysteine 192–cysteine 203. N-linked (GlcNAc...) asparagine glycosylation is present at asparagine 89. Asparagine 368 carries an N-linked (GlcNAc...) asparagine glycan.

This sequence belongs to the polysaccharide lyase 4 family.

The protein localises to the secreted. The catalysed reaction is Endotype eliminative cleavage of L-alpha-rhamnopyranosyl-(1-&gt;4)-alpha-D-galactopyranosyluronic acid bonds of rhamnogalacturonan I domains in ramified hairy regions of pectin leaving L-rhamnopyranose at the reducing end and 4-deoxy-4,5-unsaturated D-galactopyranosyluronic acid at the non-reducing end.. Its function is as follows. Could be a pectinolytic enzyme that hydrolyzes the alpha-L-rhamnopyranosyl-(1,4)-alpha-D-galacturonopyranosyl glycosidic linkage by beta-elimination, thereby generating oligosaccharides terminating at the non-reducing end with a hex-4-enopyranosyluronic acid residue. The polypeptide is Putative rhamnogalacturonase (asd-1) (Neurospora crassa (strain ATCC 24698 / 74-OR23-1A / CBS 708.71 / DSM 1257 / FGSC 987)).